A 372-amino-acid chain; its full sequence is tRNA-specific 2-thiouridylase MnmA (372 aa).

ATP contacts are provided by residues 16 to 23 and M42; that span reads GMSGGVDS. Residues 102–104 are interaction with target base in tRNA; sequence NPD. C107 serves as the catalytic Nucleophile. The cysteines at positions 107 and 205 are disulfide-linked. ATP is bound at residue G132. Positions 155-157 are interaction with tRNA; the sequence is KDQ. Residue C205 is the Cysteine persulfide intermediate of the active site. The tract at residues 317 to 318 is interaction with tRNA; sequence RY.

The protein belongs to the MnmA/TRMU family.

It localises to the cytoplasm. The catalysed reaction is S-sulfanyl-L-cysteinyl-[protein] + uridine(34) in tRNA + AH2 + ATP = 2-thiouridine(34) in tRNA + L-cysteinyl-[protein] + A + AMP + diphosphate + H(+). In terms of biological role, catalyzes the 2-thiolation of uridine at the wobble position (U34) of tRNA, leading to the formation of s(2)U34. The chain is tRNA-specific 2-thiouridylase MnmA from Shewanella frigidimarina (strain NCIMB 400).